The primary structure comprises 204 residues: Thymidylate kinase (204 aa).

11–18 (GIDGAGKS) contacts ATP.

The protein belongs to the thymidylate kinase family.

The catalysed reaction is dTMP + ATP = dTDP + ADP. In terms of biological role, phosphorylation of dTMP to form dTDP in both de novo and salvage pathways of dTTP synthesis. This chain is Thymidylate kinase, found in Janthinobacterium sp. (strain Marseille) (Minibacterium massiliensis).